The primary structure comprises 411 residues: Glutamate dehydrogenase 1 (411 aa).

Lys102 is an active-site residue.

Belongs to the Glu/Leu/Phe/Val dehydrogenases family.

It catalyses the reaction L-glutamate + NAD(+) + H2O = 2-oxoglutarate + NH4(+) + NADH + H(+). The catalysed reaction is L-glutamate + NADP(+) + H2O = 2-oxoglutarate + NH4(+) + NADPH + H(+). The protein is Glutamate dehydrogenase 1 (GDH1) of Arabidopsis thaliana (Mouse-ear cress).